The chain runs to 565 residues: Glucose-6-phosphate isomerase (565 aa).

Catalysis depends on E373, which acts as the Proton donor. Residues H404 and K530 contribute to the active site.

Belongs to the GPI family.

It is found in the cytoplasm. It catalyses the reaction alpha-D-glucose 6-phosphate = beta-D-fructose 6-phosphate. The protein operates within carbohydrate biosynthesis; gluconeogenesis. It functions in the pathway carbohydrate degradation; glycolysis; D-glyceraldehyde 3-phosphate and glycerone phosphate from D-glucose: step 2/4. Functionally, catalyzes the reversible isomerization of glucose-6-phosphate to fructose-6-phosphate. This is Glucose-6-phosphate isomerase from Corynebacterium jeikeium (strain K411).